A 610-amino-acid polypeptide reads, in one-letter code: UvrABC system protein C (610 aa).

Residues 16-94 (SQPGVYRMYD…IKLYQPRYNV (79 aa)) enclose the GIY-YIG domain. One can recognise a UVR domain in the interval 204–239 (DQVINQLVSRMEQASQNLAFEEAARLRDQIQAVRRV).

It belongs to the UvrC family. Interacts with UvrB in an incision complex.

The protein resides in the cytoplasm. Its function is as follows. The UvrABC repair system catalyzes the recognition and processing of DNA lesions. UvrC both incises the 5' and 3' sides of the lesion. The N-terminal half is responsible for the 3' incision and the C-terminal half is responsible for the 5' incision. The chain is UvrABC system protein C from Cronobacter sakazakii (strain ATCC BAA-894) (Enterobacter sakazakii).